We begin with the raw amino-acid sequence, 694 residues long: MTDTVFSNSSNRWMYPSDRPLQSNDKEQLQAGWSVHPGGQPDRQRKQEELTDEEKEIINRVIARAEKMEEMEQERIGRLVDRLENMRKNVAGDGVNRCILCGEQLGMLGSACVVCEDCKKNVCTKCGVETNNRLHSVWLCKICIEQREVWKRSGAWFFKGFPKQVLPQPMPIKKTKPQQPVSEPAAPEQPAPEPKHPARAPARGDSEDRRGPGQKTGPDPASAPGRGNYGPPVRRASEARMSSSSRDSESWDHSGGAGDSSRSPAGLRRANSVQASRPAPGSVQSPAPPQPGQPGTPGGSRPGPGPAGRFPDQKPEVAPSDPGTTAPPREERTGGVGGYPAVGAREDRMSHPSGPYSQASAAAPQPAAARQPPPPEEEEEEANSYDSDEATTLGALEFSLLYDQDNSSLQCTIIKAKGLKPMDSNGLADPYVKLHLLPGASKSNKLRTKTLRNTRNPIWNETLVYHGITDEDMQRKTLRISVCDEDKFGHNEFIGETRFSLKKLKPNQRKNFNICLERVIPMKRAGTTGSARGMALYEEEQVERVGDIEERGKILVSLMYSTQQGGLIVGIIRCVHLAAMDANGYSDPFVKLWLKPDMGKKAKHKTQIKKKTLNPEFNEEFFYDIKHSDLAKKSLDISVWDYDIGKSNDYIGGCQLGISAKGERLKHWYECLKNKDKKIERWHQLQNENHVSSD.

Residues Met-1–Arg-12 are compositionally biased toward polar residues. Residues Met-1–Thr-51 form a disordered region. A RabBD domain is found at Gln-44–Gly-160. Residues Gly-92–Glu-148 form an FYVE-type zinc finger. Cys-98, Cys-101, Cys-115, Cys-118, Cys-123, Cys-126, Cys-140, and Cys-143 together coordinate Zn(2+). Residues Leu-166 to Asp-388 form a disordered region. A compositionally biased stretch (low complexity) spans Pro-177–Ala-186. A compositionally biased stretch (basic and acidic residues) spans Ala-202 to Gly-211. Arg-226 is modified (omega-N-methylarginine). At Ser-272 the chain carries Phosphoserine. The span at Pro-352–Arg-370 shows a compositional bias: low complexity. Residues Pro-375–Asp-388 are compositionally biased toward acidic residues. The C2 1 domain maps to Thr-392 to Ile-514. Residues Met-422, Asp-423, Asp-429, Asp-484, Glu-485, Asp-486, Glu-492, Glu-539, Asp-581, Asp-587, Asp-641, Tyr-642, Asp-643, and Asp-649 each contribute to the Ca(2+) site. The C2 2 domain occupies Glu-550–His-683. Phosphoserine is present on residues Ser-692 and Ser-693.

Interacts with RAB3B, RAB3C, RAB3D, RAB8A, RAB27A and RAB27B. Interacts with RAB3A; this interaction recruits RPH3A to synaptic vesicules. Interacts (via C2B domain) with SNAP25. Interacts with deubiquitinating enzyme CAND1; this interaction results in the deubiquitination of RPH3A. Interacts with GRIN2A and DLG4; this ternary complex regulates NMDA receptor composition at postsynaptic membranes. Interacts with SNCA. Requires Ca(2+) as cofactor. Ubiquitinated. Deubiquitinated by CAND1 to prevent its degradation.

It localises to the cytoplasmic vesicle. The protein resides in the secretory vesicle. The protein localises to the synaptic vesicle membrane. It is found in the cell projection. Its subcellular location is the dendritic spine. It localises to the postsynaptic cell membrane. The protein resides in the membrane. Its function is as follows. Plays an essential role in docking and fusion steps of regulated exocytosis. At the presynaptic level, RPH3A is recruited by RAB3A to the synaptic vesicle membrane in a GTP-dependent manner where it modulates synaptic vesicle trafficking and calcium-triggered neurotransmitter release. In the post-synaptic compartment, forms a ternary complex with GRIN2A and DLG4 and regulates NMDA receptor stability. Also plays a role in the exocytosis of arginine vasopressin hormone. The polypeptide is Rabphilin-3A (RPH3A) (Homo sapiens (Human)).